A 717-amino-acid chain; its full sequence is Transport/processing ATP-binding protein ComA (717 aa).

The 128-residue stretch at 11–138 (QVDQMDCGVA…EEWTGVTLFM (128 aa)) folds into the Peptidase C39 domain. C17 is an active-site residue. The next 7 helical transmembrane spans lie at 18–38 (GVASLAMVFGYYGSYYFLAHL), 166–186 (GLIANIVLATLLVTVINIVGS), 205–225 (LGIISIGLVIVYILQQILSYA), 237–257 (LSIDVILSYIKHVFHLPMSFF), 281–301 (STILSIFLDVSTVVIISLVLF), 306–326 (NLFFMTLLALPIYTVIIFAFM), and 397–417 (VAHLLLNVGILWMGAVLVMDG). Residues 168 to 450 (IANIVLATLL…IINLQTKLQT (283 aa)) form the ABC transmembrane type-1 domain. Positions 484–717 (MTFKQVHYKY…GGFYAHLVNS (234 aa)) constitute an ABC transporter domain. 517–524 (GISGSGKT) is a binding site for ATP.

This sequence belongs to the ABC transporter superfamily. HlyB family.

The protein localises to the cell membrane. Its function is as follows. Required for induction of competence. Seems to transport the competence-stimulating peptide (CSP). The sequence is that of Transport/processing ATP-binding protein ComA (comA) from Streptococcus pneumoniae (strain ATCC BAA-255 / R6).